The sequence spans 257 residues: Acetylglutamate kinase (257 aa).

Residues 43 to 44, Arg65, and Asn157 contribute to the substrate site; that span reads GG. ATP-binding positions include 180–185 and 208–210; these read DVSGIL and IIT.

It belongs to the acetylglutamate kinase family. ArgB subfamily. In terms of assembly, homodimer.

Its subcellular location is the cytoplasm. It carries out the reaction N-acetyl-L-glutamate + ATP = N-acetyl-L-glutamyl 5-phosphate + ADP. Its pathway is amino-acid biosynthesis; L-arginine biosynthesis; N(2)-acetyl-L-ornithine from L-glutamate: step 2/4. Functionally, catalyzes the ATP-dependent phosphorylation of N-acetyl-L-glutamate. The polypeptide is Acetylglutamate kinase (Salmonella paratyphi A (strain AKU_12601)).